A 234-amino-acid polypeptide reads, in one-letter code: HTH-type transcriptional repressor FabR (234 aa).

One can recognise an HTH tetR-type domain in the interval 29 to 89 (KTRRSLVEAA…TMVDESGLML (61 aa)). A DNA-binding region (H-T-H motif) is located at residues 52 to 71 (SLREVAREAGIAPTSFYRHF).

Homodimer.

The protein resides in the cytoplasm. Its activity is regulated as follows. Has been suggested to require either an unsaturated acyl carrier protein or unsaturated acyl-CoA (but not their saturated equivalents) for DNA-binding. Another group suggests that unsaturated thioesters are not essential but act instead to enhance DNA-binding. Functionally, binds the promoter region of at least fabA and fabB, but probably not yqfA. Represses the transcription of fabA and fabB, involved in unsaturated fatty acid (UFA) biosynthesis. By controlling UFA production, FabR directly influences the physical properties of the membrane bilayer. The sequence is that of HTH-type transcriptional repressor FabR from Escherichia coli (strain K12).